Reading from the N-terminus, the 102-residue chain is MAIKHDDGTVLMRQEQKLKPPSMYQVLLLNDDYTPMEFVVMILQEYFSKDRETATQIMLMVHRDGKGICGVYPKDIASTKVELVLNHARKAGHPLQCVMEEV.

Belongs to the ClpS family. As to quaternary structure, binds to the N-terminal domain of the chaperone ClpA.

Its function is as follows. Involved in the modulation of the specificity of the ClpAP-mediated ATP-dependent protein degradation. This Herminiimonas arsenicoxydans protein is ATP-dependent Clp protease adapter protein ClpS.